Here is an 894-residue protein sequence, read N- to C-terminus: DNA mismatch repair protein MutS (894 aa).

An ATP-binding site is contributed by 607–614 (GPNMSGKS).

Belongs to the DNA mismatch repair MutS family.

Functionally, this protein is involved in the repair of mismatches in DNA. It is possible that it carries out the mismatch recognition step. This protein has a weak ATPase activity. The polypeptide is DNA mismatch repair protein MutS (Bacillus cereus (strain ZK / E33L)).